The chain runs to 178 residues: GGVGKSALTIQLIQNHFVDEYDPTIEDSYRQQVVIDGETCLLDILDTAGQEEYSAMRDQYMRTGEGFLLVFAVNNAKSFEDISAYREQIKRVKDAEEVPMVLVGNKCDLPTRAVDMSQAREVARQYGIPFVETSAKTRMGVDDGFYTLVREIKKDKMKKGNSSRRGRSGRKQLKCSIL.

Residue 1 to 6 (GGVGKS) coordinates GTP. An Effector region motif is present at residues 21 to 29 (YDPTIEDSY). Residues 46-50 (DTAGQ) and 105-108 (NKCD) contribute to the GTP site. At cysteine 175 the chain carries Cysteine methyl ester. Residue cysteine 175 is the site of S-geranylgeranyl cysteine attachment. Positions 176–178 (SIL) are cleaved as a propeptide — removed in mature form.

This sequence belongs to the small GTPase superfamily. Ras family.

It localises to the cell membrane. The catalysed reaction is GTP + H2O = GDP + phosphate + H(+). With respect to regulation, alternates between an inactive form bound to GDP and an active form bound to GTP. Activated by a guanine nucleotide-exchange factor (GEF) and inactivated by a GTPase-activating protein (GAP). In terms of biological role, ras proteins bind GDP/GTP and possess intrinsic GTPase activity. This is Ras-like protein from Artemia salina (Brine shrimp).